Here is a 368-residue protein sequence, read N- to C-terminus: tRNA-specific 2-thiouridylase MnmA (368 aa).

Residues 11–18 (GMSGGVDS) and methionine 37 each bind ATP. Residues 97 to 99 (NPD) form an interaction with target base in tRNA region. Cysteine 102 functions as the Nucleophile in the catalytic mechanism. Cysteine 102 and cysteine 199 are disulfide-bonded. An ATP-binding site is contributed by glycine 127. The tract at residues 149–151 (KDQ) is interaction with tRNA. The active-site Cysteine persulfide intermediate is the cysteine 199. Positions 311-312 (RY) are interaction with tRNA.

The protein belongs to the MnmA/TRMU family. As to quaternary structure, interacts with TusE.

Its subcellular location is the cytoplasm. It carries out the reaction S-sulfanyl-L-cysteinyl-[protein] + uridine(34) in tRNA + AH2 + ATP = 2-thiouridine(34) in tRNA + L-cysteinyl-[protein] + A + AMP + diphosphate + H(+). Functionally, catalyzes the 2-thiolation of uridine at the wobble position (U34) of tRNA(Lys), tRNA(Glu) and tRNA(Gln), leading to the formation of s(2)U34, the first step of tRNA-mnm(5)s(2)U34 synthesis. Sulfur is provided by IscS, via a sulfur-relay system. Binds ATP and its substrate tRNAs. The chain is tRNA-specific 2-thiouridylase MnmA from Klebsiella pneumoniae subsp. pneumoniae (strain ATCC 700721 / MGH 78578).